The chain runs to 356 residues: S-adenosylmethionine:tRNA ribosyltransferase-isomerase (356 aa).

This sequence belongs to the QueA family. As to quaternary structure, monomer.

It is found in the cytoplasm. The enzyme catalyses 7-aminomethyl-7-carbaguanosine(34) in tRNA + S-adenosyl-L-methionine = epoxyqueuosine(34) in tRNA + adenine + L-methionine + 2 H(+). The protein operates within tRNA modification; tRNA-queuosine biosynthesis. Transfers and isomerizes the ribose moiety from AdoMet to the 7-aminomethyl group of 7-deazaguanine (preQ1-tRNA) to give epoxyqueuosine (oQ-tRNA). This is S-adenosylmethionine:tRNA ribosyltransferase-isomerase from Xanthomonas oryzae pv. oryzae (strain KACC10331 / KXO85).